The chain runs to 826 residues: Arsenite oxidase subunit AioA (826 aa).

[3Fe-4S] cluster contacts are provided by cysteine 22, cysteine 25, and cysteine 29. The substrate site is built by histidine 196, glutamate 204, arginine 420, and histidine 424.

The protein belongs to the prokaryotic molybdopterin-containing oxidoreductase family. As to quaternary structure, heterodimer consisting of a large and a small subunit. It depends on [3Fe-4S] cluster as a cofactor. Requires Mo-bis(molybdopterin guanine dinucleotide) as cofactor.

The catalysed reaction is 2 oxidized [azurin] + arsenite + H2O = 2 reduced [azurin] + arsenate + 3 H(+). Its function is as follows. Involved in the detoxification of arsenic. Oxidizes As(III)O3(3-) (arsenite) to the somewhat less toxic As(V)O4(3-) (arsenate). The protein is Arsenite oxidase subunit AioA (aioA) of Alcaligenes faecalis.